Reading from the N-terminus, the 177-residue chain is Coatomer subunit zeta-3 (177 aa).

Belongs to the adaptor complexes small subunit family. As to quaternary structure, oligomeric complex that consists of at least the alpha, beta, beta', gamma, delta, epsilon and zeta subunits.

It localises to the cytoplasm. It is found in the golgi apparatus membrane. The protein localises to the cytoplasmic vesicle. The protein resides in the COPI-coated vesicle membrane. Its function is as follows. The coatomer is a cytosolic protein complex that binds to dilysine motifs and reversibly associates with Golgi non-clathrin-coated vesicles, which further mediate biosynthetic protein transport from the ER, via the Golgi up to the trans Golgi network. Coatomer complex is required for budding from Golgi membranes, and is essential for the retrograde Golgi-to-ER transport of dilysine-tagged proteins. The zeta subunit may be involved in regulating the coat assembly and, hence, the rate of biosynthetic protein transport due to its association-dissociation properties with the coatomer complex. The chain is Coatomer subunit zeta-3 from Oryza sativa subsp. japonica (Rice).